We begin with the raw amino-acid sequence, 259 residues long: Phosphatidylglycerol--prolipoprotein diacylglyceryl transferase (259 aa).

The next 4 helical transmembrane spans lie at 9 to 29 (IIFS…VIGI), 55 to 75 (FITY…VLLY), 92 to 112 (EGGM…YLFC), and 117 to 137 (INFL…LFLG). Residue Arg-138 participates in a 1,2-diacyl-sn-glycero-3-phospho-(1'-sn-glycerol) binding. Transmembrane regions (helical) follow at residues 172–192 (QLYE…YTTF), 201–221 (GLNS…IEIF), and 228–248 (IGFI…MLLL).

Belongs to the Lgt family.

It localises to the cell inner membrane. It catalyses the reaction L-cysteinyl-[prolipoprotein] + a 1,2-diacyl-sn-glycero-3-phospho-(1'-sn-glycerol) = an S-1,2-diacyl-sn-glyceryl-L-cysteinyl-[prolipoprotein] + sn-glycerol 1-phosphate + H(+). It functions in the pathway protein modification; lipoprotein biosynthesis (diacylglyceryl transfer). Functionally, catalyzes the transfer of the diacylglyceryl group from phosphatidylglycerol to the sulfhydryl group of the N-terminal cysteine of a prolipoprotein, the first step in the formation of mature lipoproteins. The sequence is that of Phosphatidylglycerol--prolipoprotein diacylglyceryl transferase from Rickettsia africae (strain ESF-5).